The following is a 235-amino-acid chain: RNA pyrophosphohydrolase (235 aa).

The 144-residue stretch at 6-149 (GFRPNVGIIL…KREVYQLALS (144 aa)) folds into the Nudix hydrolase domain. Residues 38–59 (GGIKYGETPEQAMFRELHEEVG) carry the Nudix box motif. The segment at 161-235 (APLSPYGRGG…PDDTAPKDNS (75 aa)) is disordered. The span at 171-196 (QHRERDGRDARDSRERSSDQGGRNEQ) shows a compositional bias: basic and acidic residues. The segment covering 203-220 (TVTTTTVIVETVSVSAPT) has biased composition (low complexity).

The protein belongs to the Nudix hydrolase family. RppH subfamily. Requires a divalent metal cation as cofactor.

Its function is as follows. Accelerates the degradation of transcripts by removing pyrophosphate from the 5'-end of triphosphorylated RNA, leading to a more labile monophosphorylated state that can stimulate subsequent ribonuclease cleavage. The chain is RNA pyrophosphohydrolase from Ralstonia pickettii (strain 12J).